We begin with the raw amino-acid sequence, 307 residues long: Homoserine O-acetyltransferase (307 aa).

The active-site Acyl-thioester intermediate is cysteine 142. 2 residues coordinate substrate: lysine 163 and serine 192. The active-site Proton acceptor is the histidine 235. The active site involves glutamate 237. Arginine 249 is a substrate binding site.

It belongs to the MetA family.

Its subcellular location is the cytoplasm. The enzyme catalyses L-homoserine + acetyl-CoA = O-acetyl-L-homoserine + CoA. It participates in amino-acid biosynthesis; L-methionine biosynthesis via de novo pathway; O-acetyl-L-homoserine from L-homoserine: step 1/1. Its function is as follows. Transfers an acetyl group from acetyl-CoA to L-homoserine, forming acetyl-L-homoserine. In Rhizobium leguminosarum bv. trifolii (strain WSM2304), this protein is Homoserine O-acetyltransferase.